Here is a 209-residue protein sequence, read N- to C-terminus: Large ribosomal subunit protein uL4 (209 aa).

Residues 47-72 (TSSTKTRSEVRGSSKKPWKQKGTGRA) are disordered. Basic residues predominate over residues 59 to 72 (SSKKPWKQKGTGRA).

The protein belongs to the universal ribosomal protein uL4 family. In terms of assembly, part of the 50S ribosomal subunit.

Its function is as follows. One of the primary rRNA binding proteins, this protein initially binds near the 5'-end of the 23S rRNA. It is important during the early stages of 50S assembly. It makes multiple contacts with different domains of the 23S rRNA in the assembled 50S subunit and ribosome. In terms of biological role, forms part of the polypeptide exit tunnel. This chain is Large ribosomal subunit protein uL4, found in Borreliella burgdorferi (strain ZS7) (Borrelia burgdorferi).